The sequence spans 199 residues: MIQVEENEHIQTLVYQLNKEGKSICGDSFFMKADDKELICAVADGLGSGSLANESSAAIKDLVENYASEDVESIIERCNQAMKNKRGATASILKINFEQRQFTYCSVGNVRFILHSPSGESFYPLPISGYLSGKPQKYKTHTATYEKGSKFIIHTDGLNVPDIRSHLKKGQSVEEISNSLKMYTTSRKDDLTYILGQLS.

In terms of domain architecture, PPM-type phosphatase spans 11 to 198 (QTLVYQLNKE…DDLTYILGQL (188 aa)).

The enzyme catalyses O-phospho-L-serine + H2O = L-serine + phosphate. It catalyses the reaction O-phospho-D-serine + H2O = D-serine + phosphate. Its function is as follows. Negative regulator of sigma-B activity. Dephosphorylates RsbS. Plays a role both in maintaining low sigma-B activity during growth and in reestablishing prestress sigma-B activity after induction. Could have a negative feedback role by indirectly communicating sigma-B protein levels. This Bacillus subtilis (strain 168) protein is Phosphoserine phosphatase RsbX (rsbX).